Here is a 238-residue protein sequence, read N- to C-terminus: Hydroxyacylglutathione hydrolase (238 aa).

Positions 52, 54, 56, 57, 108, 125, and 163 each coordinate Zn(2+).

This sequence belongs to the metallo-beta-lactamase superfamily. Glyoxalase II family. Monomer. Zn(2+) serves as cofactor.

It carries out the reaction an S-(2-hydroxyacyl)glutathione + H2O = a 2-hydroxy carboxylate + glutathione + H(+). It functions in the pathway secondary metabolite metabolism; methylglyoxal degradation; (R)-lactate from methylglyoxal: step 2/2. Thiolesterase that catalyzes the hydrolysis of S-D-lactoyl-glutathione to form glutathione and D-lactic acid. The sequence is that of Hydroxyacylglutathione hydrolase from Haemophilus influenzae (strain ATCC 51907 / DSM 11121 / KW20 / Rd).